The primary structure comprises 283 residues: Elongation factor Ts (283 aa).

The involved in Mg(2+) ion dislocation from EF-Tu stretch occupies residues 80–83; sequence TDFV.

It belongs to the EF-Ts family.

It localises to the cytoplasm. Functionally, associates with the EF-Tu.GDP complex and induces the exchange of GDP to GTP. It remains bound to the aminoacyl-tRNA.EF-Tu.GTP complex up to the GTP hydrolysis stage on the ribosome. The polypeptide is Elongation factor Ts (Haemophilus ducreyi (strain 35000HP / ATCC 700724)).